Here is a 211-residue protein sequence, read N- to C-terminus: Small ribosomal subunit protein uS3 (211 aa).

The KH type-2 domain occupies 16–85 (IDEYFKTKLV…NPQIEVKQVE (70 aa)).

This sequence belongs to the universal ribosomal protein uS3 family. As to quaternary structure, part of the 30S ribosomal subunit.

Binds the lower part of the 30S subunit head. This is Small ribosomal subunit protein uS3 from Methanococcus maripaludis (strain C7 / ATCC BAA-1331).